The primary structure comprises 302 residues: L-glutamate/L-aspartate-binding protein (302 aa).

The signal sequence occupies residues 1-23; that stretch reads MRIAPSLLSTAIVAALLSAPVVA.

The protein belongs to the bacterial solute-binding protein 3 family.

Its subcellular location is the periplasm. Functionally, binds L-glutamate and L-aspartate. The chain is L-glutamate/L-aspartate-binding protein from Pseudomonas aeruginosa (strain ATCC 15692 / DSM 22644 / CIP 104116 / JCM 14847 / LMG 12228 / 1C / PRS 101 / PAO1).